Reading from the N-terminus, the 176-residue chain is tRNA (cytidine(56)-2'-O)-methyltransferase (176 aa).

S-adenosyl-L-methionine contacts are provided by residues Leu-86 and 111-115; that span reads GAEKV.

Belongs to the aTrm56 family. In terms of assembly, homodimer.

The protein localises to the cytoplasm. The catalysed reaction is cytidine(56) in tRNA + S-adenosyl-L-methionine = 2'-O-methylcytidine(56) in tRNA + S-adenosyl-L-homocysteine + H(+). Functionally, specifically catalyzes the AdoMet-dependent 2'-O-ribose methylation of cytidine at position 56 in tRNAs. The sequence is that of tRNA (cytidine(56)-2'-O)-methyltransferase from Methanoregula boonei (strain DSM 21154 / JCM 14090 / 6A8).